A 491-amino-acid chain; its full sequence is Nicotinamide phosphoribosyltransferase (491 aa).

At methionine 1 the chain carries N-acetylmethionine. A Phosphotyrosine modification is found at tyrosine 188. Arginine 196 lines the diphosphate pocket. Position 219 (aspartate 219) interacts with beta-nicotinamide D-ribonucleotide. Histidine 247 and arginine 311 together coordinate diphosphate. Beta-nicotinamide D-ribonucleotide is bound by residues 311 to 313 (RPD), 353 to 354 (GD), glycine 384, and arginine 392. Serine 472 bears the Phosphoserine mark.

It belongs to the NAPRTase family. As to quaternary structure, homodimer. Expressed in various tissues. At the highest level in liver and at the second highest in heart. The amount is higher in heart than in lung.

Its subcellular location is the nucleus. It localises to the cytoplasm. The protein localises to the secreted. The catalysed reaction is beta-nicotinamide D-ribonucleotide + diphosphate = 5-phospho-alpha-D-ribose 1-diphosphate + nicotinamide + H(+). It functions in the pathway cofactor biosynthesis; NAD(+) biosynthesis; nicotinamide D-ribonucleotide from 5-phospho-alpha-D-ribose 1-diphosphate and nicotinamide: step 1/1. Catalyzes the condensation of nicotinamide with 5-phosphoribosyl-1-pyrophosphate to yield nicotinamide mononucleotide, an intermediate in the biosynthesis of NAD. It is the rate limiting component in the mammalian NAD biosynthesis pathway. The secreted form behaves both as a cytokine with immunomodulating properties and an adipokine with anti-diabetic properties, it has no enzymatic activity, partly because of lack of activation by ATP, which has a low level in extracellular space and plasma. Plays a role in the modulation of circadian clock function. NAMPT-dependent oscillatory production of NAD regulates oscillation of clock target gene expression by releasing the core clock component: CLOCK-BMAL1 heterodimer from NAD-dependent SIRT1-mediated suppression. This is Nicotinamide phosphoribosyltransferase (Nampt) from Rattus norvegicus (Rat).